Consider the following 669-residue polypeptide: DNA ligase (669 aa).

NAD(+)-binding positions include D31–D35, S80–L81, and E112. The active-site N6-AMP-lysine intermediate is K114. The NAD(+) site is built by R135, E172, K289, and K313. The Zn(2+) site is built by C407, C410, C425, and C430. Positions T591–P669 constitute a BRCT domain.

This sequence belongs to the NAD-dependent DNA ligase family. LigA subfamily. It depends on Mg(2+) as a cofactor. Mn(2+) is required as a cofactor.

The catalysed reaction is NAD(+) + (deoxyribonucleotide)n-3'-hydroxyl + 5'-phospho-(deoxyribonucleotide)m = (deoxyribonucleotide)n+m + AMP + beta-nicotinamide D-nucleotide.. Its function is as follows. DNA ligase that catalyzes the formation of phosphodiester linkages between 5'-phosphoryl and 3'-hydroxyl groups in double-stranded DNA using NAD as a coenzyme and as the energy source for the reaction. It is essential for DNA replication and repair of damaged DNA. This is DNA ligase from Synechocystis sp. (strain ATCC 27184 / PCC 6803 / Kazusa).